The chain runs to 304 residues: uncharacterized protein (304 aa).

The protein belongs to the mimivirus L137 family.

This is an uncharacterized protein from Acanthamoeba polyphaga mimivirus (APMV).